Here is a 50-residue protein sequence, read N- to C-terminus: MLVARLLRWALTVSLRLDPYGRKDEMAGAVGRFATKPVLQEAHARGRATA.

This is an uncharacterized protein from Sinorhizobium fredii (strain NBRC 101917 / NGR234).